The following is a 159-amino-acid chain: 6,7-dimethyl-8-ribityllumazine synthase (159 aa).

Residues Trp-26, 57–59, and 79–81 contribute to the 5-amino-6-(D-ribitylamino)uracil site; these read ALE and CVV. Residue 84 to 85 coordinates (2S)-2-hydroxy-3-oxobutyl phosphate; it reads GT. Catalysis depends on His-87, which acts as the Proton donor. A 5-amino-6-(D-ribitylamino)uracil-binding site is contributed by Asn-112. Arg-126 contributes to the (2S)-2-hydroxy-3-oxobutyl phosphate binding site.

The protein belongs to the DMRL synthase family.

The catalysed reaction is (2S)-2-hydroxy-3-oxobutyl phosphate + 5-amino-6-(D-ribitylamino)uracil = 6,7-dimethyl-8-(1-D-ribityl)lumazine + phosphate + 2 H2O + H(+). It participates in cofactor biosynthesis; riboflavin biosynthesis; riboflavin from 2-hydroxy-3-oxobutyl phosphate and 5-amino-6-(D-ribitylamino)uracil: step 1/2. Catalyzes the formation of 6,7-dimethyl-8-ribityllumazine by condensation of 5-amino-6-(D-ribitylamino)uracil with 3,4-dihydroxy-2-butanone 4-phosphate. This is the penultimate step in the biosynthesis of riboflavin. The sequence is that of 6,7-dimethyl-8-ribityllumazine synthase from Corynebacterium glutamicum (strain ATCC 13032 / DSM 20300 / JCM 1318 / BCRC 11384 / CCUG 27702 / LMG 3730 / NBRC 12168 / NCIMB 10025 / NRRL B-2784 / 534).